We begin with the raw amino-acid sequence, 330 residues long: Cathepsin S (330 aa).

Positions 1 to 17 (MKQLVCVLFVCSSAVTQ) are cleaved as a signal peptide. Positions 18 to 114 (LHKDPTLDHH…ITYKSNPNQM (97 aa)) are cleaved as a propeptide — activation peptide. Asparagine 104 carries N-linked (GlcNAc...) asparagine glycosylation. 4 disulfides stabilise this stretch: cysteine 126-cysteine 223, cysteine 136-cysteine 179, cysteine 170-cysteine 212, and cysteine 271-cysteine 319. Cysteine 139 is a catalytic residue. Active-site residues include histidine 277 and asparagine 297.

It belongs to the peptidase C1 family.

The protein localises to the lysosome. It localises to the secreted. The protein resides in the cytoplasmic vesicle. It is found in the phagosome. It catalyses the reaction Similar to cathepsin L, but with much less activity on Z-Phe-Arg-|-NHMec, and more activity on the Z-Val-Val-Arg-|-Xaa compound.. Functionally, thiol protease. Key protease responsible for the removal of the invariant chain from MHC class II molecules and MHC class II antigen presentation. The bond-specificity of this proteinase is in part similar to the specificities of cathepsin L. In Saimiri boliviensis boliviensis (Bolivian squirrel monkey), this protein is Cathepsin S (CTSS).